Reading from the N-terminus, the 323-residue chain is tRNA dimethylallyltransferase (323 aa).

21-28 (GPTACNKS) lines the ATP pocket. 23–28 (TACNKS) contributes to the substrate binding site. Interaction with substrate tRNA regions lie at residues 46–49 (DSAL), 171–175 (QRVLR), and 252–257 (RCVGYR).

It belongs to the IPP transferase family. As to quaternary structure, monomer. Requires Mg(2+) as cofactor.

It carries out the reaction adenosine(37) in tRNA + dimethylallyl diphosphate = N(6)-dimethylallyladenosine(37) in tRNA + diphosphate. Functionally, catalyzes the transfer of a dimethylallyl group onto the adenine at position 37 in tRNAs that read codons beginning with uridine, leading to the formation of N6-(dimethylallyl)adenosine (i(6)A). The polypeptide is tRNA dimethylallyltransferase (Buchnera aphidicola subsp. Baizongia pistaciae (strain Bp)).